The chain runs to 216 residues: Probable GTP-binding protein EngB (216 aa).

Residues 27-201 enclose the EngB-type G domain; sequence EGIEVAFAGR…SQKLNTWFNE (175 aa). Residues 35–42, 62–66, 80–83, 147–150, and 180–182 each bind GTP; these read GRSNAGKS, GRTQL, DLPG, TKAD, and FSS. Mg(2+) contacts are provided by Ser-42 and Thr-64.

The protein belongs to the TRAFAC class TrmE-Era-EngA-EngB-Septin-like GTPase superfamily. EngB GTPase family. Mg(2+) serves as cofactor.

Necessary for normal cell division and for the maintenance of normal septation. This chain is Probable GTP-binding protein EngB, found in Serratia proteamaculans (strain 568).